The chain runs to 625 residues: Enolase 4 (625 aa).

The disordered stretch occupies residues 184–226; it reads YSTVPTPLPPVPPPPPPPPPTKKKGQKPGRKDTITEKPIAPAE. The segment covering 189-203 has biased composition (pro residues); that stretch reads TPLPPVPPPPPPPPP. Val-300 provides a ligand contact to substrate. Positions 331-350 are disordered; sequence PSPPKAETKKGHDGSKRGQQ. Positions 336-346 are enriched in basic and acidic residues; the sequence is AETKKGHDGSK. The active-site Proton acceptor is Asn-497. Position 548 (Gly-548) interacts with substrate. Residues 604-625 are disordered; that stretch reads PLVPTFPTQGVEESAETGASSG.

The protein belongs to the enolase family. As to quaternary structure, interacts with ENO1 and AKAP4. Synthesized as an approximately 70-kDa precursor, which then undergoes proteolytic cleavage to an approximately 60-kDa enzyme; HOATZ associates directly or indirectly with ENO4 to mediate this process before its transport to mature flagella.

It carries out the reaction (2R)-2-phosphoglycerate = phosphoenolpyruvate + H2O. It participates in carbohydrate degradation; glycolysis; pyruvate from D-glyceraldehyde 3-phosphate: step 4/5. Functionally, may be required for sperm motility and function. The protein is Enolase 4 of Homo sapiens (Human).